The following is a 108-amino-acid chain: Small proline-rich protein 2H (108 aa).

Over residues Met-1 to Pro-11 the composition is skewed to low complexity. The disordered stretch occupies residues Met-1–Gln-22. Pro residues predominate over residues Cys-12–Gln-22. A run of 7 repeats spans residues Pro-21–Pro-29, Pro-30–Pro-38, Pro-39–Pro-47, Pro-48–Pro-56, Pro-57–Pro-65, Pro-66–Pro-74, and Pro-75–Pro-83. The 7 X 9 AA tandem repeats of P-[KQ]-C-[PT]-E-P-C-P-P stretch occupies residues Pro-21–Pro-83. Residues Pro-83–Lys-108 are disordered. Residues Gln-87–Lys-108 show a composition bias toward low complexity.

It belongs to the cornifin (SPRR) family. Expressed weakly in uterus.

The protein localises to the cytoplasm. Its function is as follows. Cross-linked envelope protein of keratinocytes. It is a keratinocyte protein that first appears in the cell cytosol, but ultimately becomes cross-linked to membrane proteins by transglutaminase. All that results in the formation of an insoluble envelope beneath the plasma membrane. The polypeptide is Small proline-rich protein 2H (Sprr2h) (Mus musculus (Mouse)).